The following is a 2758-amino-acid chain: Highly reducing polyketide synthase NEC1 (2758 aa).

Positions 153–492 (EASSPIIGLD…GSNAHVVMDD (340 aa)) constitute a Ketosynthase family 3 (KS3) domain. Residues 512–576 (PRLPGSSSSR…NTDTLQTTDT (65 aa)) form a disordered region. Low complexity predominate over residues 566-576 (TNTDTLQTTDT). The malonyl-CoA:ACP transacylase (MAT) domain stretch occupies residues 700 to 1044 (VFTGQGAQWP…GYATVLKRGD (345 aa)). Residue Ser-790 is the For malonyltransferase activity of the active site. Residues 1124-1255 (HELLGAPVPD…GFVRTEYSQT (132 aa)) are N-terminal hotdog fold. Residues 1124 to 1442 (HELLGAPVPD…VFKTIPNTAS (319 aa)) are dehydratase (DH) domain. Positions 1124-1443 (HELLGAPVPD…FKTIPNTASS (320 aa)) constitute a PKS/mFAS DH domain. Catalysis depends on His-1156, which acts as the Proton acceptor; for dehydratase activity. The C-terminal hotdog fold stretch occupies residues 1283 to 1443 (TSMVHADKVY…FKTIPNTASS (161 aa)). Asp-1351 acts as the Proton donor; for dehydratase activity in catalysis. The methyltransferase (CMet) domain stretch occupies residues 1622–1727 (LEVGGGTGGA…RKLLKPGGKL (106 aa)). The tract at residues 2031–2344 (GTADVCFSED…LGKGEDAVVL (314 aa)) is enoyl reductase (ER) domain. A ketoreductase (KR) domain region spans residues 2372–2553 (ASYMVVGGLG…PVAVSLDLPV (182 aa)). Residues 2673-2750 (EAQAVVLDAL…ALAAAVAGRS (78 aa)) enclose the Carrier domain. The residue at position 2710 (Ser-2710) is an O-(pantetheine 4'-phosphoryl)serine.

Its function is as follows. Highly reducing polyketide synthase; part of the gene cluster that mediates the biosynthesis of nectriapyrone and its analogs phomopyrone A, acropyrone and zaepyrone. The nectriapyrone biosynthetic gene cluster consists of two genes, the highly reducing polyketide synthase NEC1 that produces a demethylated analog of nectriapyrone from one unit of acetyl-CoA and one unit of malonyl-CoA; and the O-methyltransferase NEC2 that further methylates the NEC1 product to yield nectriapyrone. Nectriapyrone is further hydrolyzed to nectriapyrone D, also known as gulypyrone B, by an unidentified hydrolase localized outside the nectriapyrone cluster. This Pyricularia oryzae (strain 70-15 / ATCC MYA-4617 / FGSC 8958) (Rice blast fungus) protein is Highly reducing polyketide synthase NEC1.